Here is a 242-residue protein sequence, read N- to C-terminus: UPF0273 protein TM_0370 (242 aa).

Residues 3–242 (KRVKTGIPGM…IYPSEGGEGR (240 aa)) enclose the KaiC domain. 30–37 (GGPGTGKT) contributes to the ATP binding site.

The protein belongs to the UPF0273 family.

This chain is UPF0273 protein TM_0370, found in Thermotoga maritima (strain ATCC 43589 / DSM 3109 / JCM 10099 / NBRC 100826 / MSB8).